Consider the following 792-residue polypeptide: Protocadherin beta-18 (792 aa).

Residues 1–26 (MAARGSCVSRQRQVLFLFLLGGLCLA) form the signal peptide. Cadherin domains follow at residues 27 to 133 (GSEL…SPIF), 134 to 242 (QDKK…APQF), 243 to 347 (PQEL…APEL), 348 to 451 (IMSS…APAF), 452 to 561 (NQTS…APFV), and 568 to 676 (ASAP…LPEV). Asn169 is a glycosylation site (N-linked (GlcNAc...) asparagine). N-linked (GlcNAc...) asparagine glycans are attached at residues Asn418 and Asn452. A helical transmembrane segment spans residues 693-713 (VIALASVSSLFLLSVLLFVGV).

It is found in the cell membrane. Potential calcium-dependent cell-adhesion protein. In Mus musculus (Mouse), this protein is Protocadherin beta-18 (Pcdhb18).